Consider the following 464-residue polypeptide: Argininosuccinate lyase 2 (464 aa).

This sequence belongs to the lyase 1 family. Argininosuccinate lyase subfamily.

It localises to the cytoplasm. The enzyme catalyses 2-(N(omega)-L-arginino)succinate = fumarate + L-arginine. It functions in the pathway amino-acid biosynthesis; L-arginine biosynthesis; L-arginine from L-ornithine and carbamoyl phosphate: step 3/3. The chain is Argininosuccinate lyase 2 from Pseudomonas fluorescens (strain Pf0-1).